The primary structure comprises 185 residues: MLLVIGLGNPGKEYQYTRHNVGFIAIEKIVNQYNSSFSTKKKFNCEIAETISDGQKIIFIKPTTYMNLSGKSVISVKTYYNIYPAKIFVIHDDIDLETGRIKFKTGGGNGGHNGLKSIDGVIGNNYNRIRIGVGRPQNNQGVADYVLNHFSKPEYETVMQAIDRITSNFGLILENKLEEFKNKIA.

Residue Tyr14 coordinates tRNA. His19 (proton acceptor) is an active-site residue. Positions 65, 67, and 113 each coordinate tRNA.

This sequence belongs to the PTH family. As to quaternary structure, monomer.

The protein resides in the cytoplasm. The enzyme catalyses an N-acyl-L-alpha-aminoacyl-tRNA + H2O = an N-acyl-L-amino acid + a tRNA + H(+). Hydrolyzes ribosome-free peptidyl-tRNAs (with 1 or more amino acids incorporated), which drop off the ribosome during protein synthesis, or as a result of ribosome stalling. Its function is as follows. Catalyzes the release of premature peptidyl moieties from peptidyl-tRNA molecules trapped in stalled 50S ribosomal subunits, and thus maintains levels of free tRNAs and 50S ribosomes. In Rickettsia conorii (strain ATCC VR-613 / Malish 7), this protein is Peptidyl-tRNA hydrolase.